Consider the following 357-residue polypeptide: Transcription factor HHO1 (357 aa).

Disordered regions lie at residues 94–117 and 171–198; these read TSIE…ETDI and NNNI…RKNR. Over residues 96–109 the composition is skewed to acidic residues; the sequence is IEEEVDDKDDDDEE. Over residues 171-182 the composition is skewed to polar residues; that stretch reads NNNIKSPVTTSD. Positions 193–253 constitute an HTH myb-type domain; sequence GQRKNRRCWS…HLQKYRLHAR (61 aa). The H-T-H motif DNA-binding region spans 224–249; sequence PKQIRDIMKVDGLTNDEVKSHLQKYR.

The protein resides in the nucleus. In terms of biological role, probable factor involved in nitrate and phosphate signaling in roots. Integrates nitrate and phosphate starvation responses and adaptation of root architecture, depending on nutrient availabilities. Acts downstream of the nitrate sensor and transporter NPF6.3/NRT1.1. Represses primary root development in response to phosphate deficiency conditions, only when nitrate is present. The polypeptide is Transcription factor HHO1 (Arabidopsis thaliana (Mouse-ear cress)).